The primary structure comprises 875 residues: MDDKEIKKLMKPEFAKNYEKYYPVQTLTAMGYHRRVCKKCGRGFWTQVERDFCDEAECSGGYRFIGESLTRKKFEYKEAWDTYVKTFEQWGYVPLERYPTVCRWYEDLYFVAAGINDFQPYVVSGEIEPPARAVLEPQFCLRFNDIDNVGITGRHYTGFIMVGQHTFNTPEKHVYFKEEGIGQIQHFLTQGLGIPAHEIVFHEDVWAGGGNFGPSIEYFSRGLELGNQVYMQYEQTPDGGFKELRTKVIDMGAGLERWAWFSQGCPMSYDATFPKTMEFIYNKTGYRADPVFHAKFAKYAGILNVEEIEDVGSAWNDVAKSMEMDLGELKDMVYKIRAQYVLADHTRSLLVAIHDGALPSNVGGGYNLRNLLRRCWSLIDQYQWDIDLNDIFRSHIDEFGSWYTELKDYGSLFDIIDVERKRYEESRRKSKDIIKRMVKAKETLTADKLVELYDSQGISPELIKEAKPDVVIPEDFYARVQARHDAKATRKIEVNETQGLPKTEPMYYEKPREFKFEANVVKLLTPTKLVLDRTLFYPLGGGQAGDTGFVNGIKVKDVYKQDGVIIHVLESPMPPDTTKVIGEVDEARRRILAAHHSATHIVNYAARKVLGDHVWQAGAEKTPEKARLDITHYESLTFQQLQEIERVANDLAMKQIPVVVREMSRTEAEMEYSMRIYQGGAVPGKILRIIVIDGYDVEACGGIHVDNTSKVGFIKMLSSERIQDGVVRLEFKSLDNAVSEIQHHESILREVSDLWGVGYDDIPKTAQRFFNEWKELGKKNKELQAELVQQTIAAALGKPGDTVDVVVTGADFGTLMKAVGSFKKEFKGRTVIFRGDNFAYGYSDLINVKEKLAEGYVNVDGSEHEAKAFKAKPKA.

Zn(2+)-binding residues include H596, H600, C700, and H704.

This sequence belongs to the class-II aminoacyl-tRNA synthetase family. Zn(2+) is required as a cofactor.

Its subcellular location is the cytoplasm. The catalysed reaction is tRNA(Ala) + L-alanine + ATP = L-alanyl-tRNA(Ala) + AMP + diphosphate. Catalyzes the attachment of alanine to tRNA(Ala) in a two-step reaction: alanine is first activated by ATP to form Ala-AMP and then transferred to the acceptor end of tRNA(Ala). Also edits incorrectly charged Ser-tRNA(Ala) and Gly-tRNA(Ala) via its editing domain. This Methanocella arvoryzae (strain DSM 22066 / NBRC 105507 / MRE50) protein is Alanine--tRNA ligase.